Here is a 284-residue protein sequence, read N- to C-terminus: MEMO1 family protein Mevan_0697 (284 aa).

Belongs to the MEMO1 family.

In Methanococcus vannielii (strain ATCC 35089 / DSM 1224 / JCM 13029 / OCM 148 / SB), this protein is MEMO1 family protein Mevan_0697.